Reading from the N-terminus, the 229-residue chain is Potassium/proton antiporter CemA (229 aa).

3 helical membrane passes run L7–F27, L106–L126, and L193–L213.

It belongs to the CemA family.

The protein localises to the plastid. The protein resides in the chloroplast inner membrane. It carries out the reaction K(+)(in) + H(+)(out) = K(+)(out) + H(+)(in). Functionally, contributes to K(+)/H(+) antiport activity by supporting proton efflux to control proton extrusion and homeostasis in chloroplasts in a light-dependent manner to modulate photosynthesis. Prevents excessive induction of non-photochemical quenching (NPQ) under continuous-light conditions. Indirectly promotes efficient inorganic carbon uptake into chloroplasts. This Illicium oligandrum (Star anise) protein is Potassium/proton antiporter CemA.